The primary structure comprises 1201 residues: Zinc finger protein sdc-1 (1201 aa).

7 C2H2-type zinc fingers span residues 117–139 (LTCAHCDWSFDNVMKLVRHRGVH), 145–168 (YMCQVCLTLFGHTYNLFMHWRTSC), 233–254 (SSCHLCHLPVPNKFLEAHGNVH), 268–290 (YFCHICGTVFIEQDNLFKHWRLH), 486–513 (IVCHKCDSKKLTITFSTEVRLKYHLLRH), 521–543 (YHCAICKIIVYNRSHEEHWINDC), and 652–674 (VVCFHCGTRCHYTLLHDHLDYCH). The disordered stretch occupies residues 1164 to 1201 (KRRNSETREHELIELDTDDLNEPSTSDGRYSFGHHGYR). Residues 1167–1176 (NSETREHELI) show a composition bias toward basic and acidic residues.

As to quaternary structure, component of the SDC complex, which consists of sdc-1, sdc-2 and sdc-3. Within the complex, interacts with sdc-2 and sdc-3.

It is found in the nucleus. The protein resides in the chromosome. Embryonic transcription factor regulating downstream genes involved specifically in the sex determination and dosage compensation pathways, or regulating other genes involved in the coordinate control of both processes. Component of the SDC complex that functions in sex determination and in X chromosome dosage compensation specifically in hermaphrodite (XX) animals. Involved in the recruitment of the condensin I-like dosage compensation complex to the male sex-determining autosomal gene her-1, thereby contributing to its repression and initiating hermaphrodite sexual development. Similarly, might contribute to X-linked gene repression through recruitment of the dosage compensation complex to the X chromosomes in hermaphrodites. Seems to be involved in the depletion of histone H4 lysine 16 acetylation (H4K16ac) on dosage compensated X chromosomes. Plays a role in developmental rate and body fat regulation downstream of the TOR complex 2 pathway. This Caenorhabditis elegans protein is Zinc finger protein sdc-1 (sdc-1).